A 431-amino-acid polypeptide reads, in one-letter code: Histidinol dehydrogenase (431 aa).

The NAD(+) site is built by Tyr130, Gln191, and Asn214. The substrate site is built by Ser237, Gln261, and His264. Positions 261 and 264 each coordinate Zn(2+). Active-site proton acceptor residues include Glu329 and His330. Substrate contacts are provided by His330, Asp363, Glu417, and His422. Position 363 (Asp363) interacts with Zn(2+). Residue His422 coordinates Zn(2+).

Belongs to the histidinol dehydrogenase family. Requires Zn(2+) as cofactor.

It catalyses the reaction L-histidinol + 2 NAD(+) + H2O = L-histidine + 2 NADH + 3 H(+). The protein operates within amino-acid biosynthesis; L-histidine biosynthesis; L-histidine from 5-phospho-alpha-D-ribose 1-diphosphate: step 9/9. In terms of biological role, catalyzes the sequential NAD-dependent oxidations of L-histidinol to L-histidinaldehyde and then to L-histidine. This Psychrobacter arcticus (strain DSM 17307 / VKM B-2377 / 273-4) protein is Histidinol dehydrogenase.